We begin with the raw amino-acid sequence, 100 residues long: Putative exopolysaccharide production repressor protein y4xQ (100 aa).

2 helical membrane passes run 9–29 (ILWLFLCANTLIVYLVTGSIS) and 35–55 (TMVGSLLLQLTYFANVLFLLW). Residues 66–100 (TTGQFHGEEQPGDPRIAGTHGRTDGDPCFEDEDSR) form a disordered region.

To Rhizobium exopolysaccharide production repressor protein (ExoX).

The protein resides in the cell membrane. Could be involved in the inhibition of exopolysaccharide synthesis (EPS) and nodulation ability (nod). The sequence is that of Putative exopolysaccharide production repressor protein y4xQ from Sinorhizobium fredii (strain NBRC 101917 / NGR234).